The following is a 278-amino-acid chain: Energy-coupling factor transporter ATP-binding protein EcfA (278 aa).

The ABC transporter domain maps to 5 to 240 (LETKNLVYNY…KEVIDEADLR (236 aa)). Residue 38–45 (GHNGAGKS) participates in ATP binding.

This sequence belongs to the ABC transporter superfamily. Energy-coupling factor EcfA family. As to quaternary structure, forms a stable energy-coupling factor (ECF) transporter complex composed of 2 membrane-embedded substrate-binding proteins (S component), 2 ATP-binding proteins (A component) and 2 transmembrane proteins (T component).

Its subcellular location is the cell membrane. ATP-binding (A) component of a common energy-coupling factor (ECF) ABC-transporter complex. Unlike classic ABC transporters this ECF transporter provides the energy necessary to transport a number of different substrates. The chain is Energy-coupling factor transporter ATP-binding protein EcfA from Methanosphaera stadtmanae (strain ATCC 43021 / DSM 3091 / JCM 11832 / MCB-3).